The sequence spans 1330 residues: Kinectin (1330 aa).

Residues 1-6 are Cytoplasmic-facing; the sequence is MEFYES. The helical; Signal-anchor for type II membrane protein transmembrane segment at 7-29 threads the bilayer; it reads TYFIVLIPSVVITVIFLFFWLFM. Residues 30–1330 are Lumenal-facing; it reads KETLYDEVLA…KEKEHYQVLE (1301 aa). Disordered regions lie at residues 49 to 81 and 108 to 218; these read PTKT…ESVP and SSSV…KQKA. A phosphoserine mark is found at S75 and S77. Basic residues predominate over residues 113 to 122; that stretch reads ERKKKEKKHK. The span at 123–135 shows a compositional bias: basic and acidic residues; it reads PVLEEQVTKESDV. Position 153 is a phosphothreonine (T153). S156 is subject to Phosphoserine. Residues 161–171 are compositionally biased toward basic residues; the sequence is SKKKPGQKKSK. Residues N172, N435, N772, N904, and N1055 are each glycosylated (N-linked (GlcNAc...) asparagine). Residues 172–182 are compositionally biased toward basic and acidic residues; it reads NGSDDQDKKVE. Residues 332–1329 adopt a coiled-coil conformation; sequence HQLQEKDKLL…TKEKEHYQVL (998 aa). Residue S1085 is modified to Phosphoserine. N-linked (GlcNAc...) asparagine glycosylation occurs at N1236. Phosphoserine is present on S1286. N-linked (GlcNAc...) asparagine glycosylation occurs at N1302.

Belongs to the kinectin family. As to quaternary structure, parallel homodimers formed between the membrane-bound and the cytosolic form, and also between 2 cytosolic forms. As to expression, expressed in male brain, heart, kidney, liver, lung, spleen and testis.

It localises to the endoplasmic reticulum membrane. Its function is as follows. Receptor for kinesin thus involved in kinesin-driven vesicle motility. This is Kinectin (KTN1) from Vulpes vulpes (Red fox).